A 125-amino-acid chain; its full sequence is Ribonuclease P protein component (125 aa).

The protein belongs to the RnpA family. As to quaternary structure, consists of a catalytic RNA component (M1 or rnpB) and a protein subunit.

The enzyme catalyses Endonucleolytic cleavage of RNA, removing 5'-extranucleotides from tRNA precursor.. In terms of biological role, RNaseP catalyzes the removal of the 5'-leader sequence from pre-tRNA to produce the mature 5'-terminus. It can also cleave other RNA substrates such as 4.5S RNA. The protein component plays an auxiliary but essential role in vivo by binding to the 5'-leader sequence and broadening the substrate specificity of the ribozyme. This chain is Ribonuclease P protein component, found in Clostridium beijerinckii (strain ATCC 51743 / NCIMB 8052) (Clostridium acetobutylicum).